The following is a 154-amino-acid chain: 3-dehydroquinate dehydratase (154 aa).

The active-site Proton acceptor is the Tyr-23. Asn-75, His-81, and Asp-88 together coordinate substrate. His-101 serves as the catalytic Proton donor. Substrate is bound by residues Leu-102–Ser-103 and Arg-112.

It belongs to the type-II 3-dehydroquinase family. As to quaternary structure, homododecamer.

It catalyses the reaction 3-dehydroquinate = 3-dehydroshikimate + H2O. Its pathway is metabolic intermediate biosynthesis; chorismate biosynthesis; chorismate from D-erythrose 4-phosphate and phosphoenolpyruvate: step 3/7. Catalyzes a trans-dehydration via an enolate intermediate. This is 3-dehydroquinate dehydratase from Teredinibacter turnerae (strain ATCC 39867 / T7901).